A 581-amino-acid chain; its full sequence is Tail sheath protein (581 aa).

This sequence belongs to the myoviridae tail sheath protein family. As to quaternary structure, homomultimer.

It is found in the virion. Its subcellular location is the host cytoplasm. Its function is as follows. Polymerizes as an extended structure around the baseplate-tail tube complex. During ejection, the sheath shifts to a contracted form, thereby making the inner tail tube protrude through the host cell envelope. The chain is Tail sheath protein from Mycobacterium phage Bxz1 (Mycobacteriophage Bxz1).